The sequence spans 438 residues: Asparagine--tRNA ligase (438 aa).

It belongs to the class-II aminoacyl-tRNA synthetase family. As to quaternary structure, homodimer.

The protein localises to the cytoplasm. It catalyses the reaction tRNA(Asn) + L-asparagine + ATP = L-asparaginyl-tRNA(Asn) + AMP + diphosphate + H(+). This chain is Asparagine--tRNA ligase, found in Thermus thermophilus (strain ATCC 27634 / DSM 579 / HB8).